Consider the following 151-residue polypeptide: MNQKEQNEHSKDFNLRSKLIGIVSITFIAAIALAVIFGGFFFGMKGLFSILGITYASNQTLALFILACFAVGLIIDPLTKIISIILAKSLSLKKTALFAFILYFISNLITICFADYFMQSIYIPDVLLVVISAFMAIIELAFDNQPNREAA.

4 helical membrane-spanning segments follow: residues 22-42, 62-82, 97-117, and 121-141; these read IVSITFIAAIALAVIFGGFFF, ALFILACFAVGLIIDPLTKII, LFAFILYFISNLITICFADYF, and IYIPDVLLVVISAFMAIIELA.

It localises to the cell membrane. This is an uncharacterized protein from Bacillus subtilis (strain 168).